Reading from the N-terminus, the 71-residue chain is DNA gyrase inhibitor YacG (71 aa).

4 residues coordinate Zn(2+): Cys8, Cys11, Cys27, and Cys31. The disordered stretch occupies residues 48 to 71; the sequence is VVEDDDLPPDAPGGESGGASGRLN. Residues 61–71 show a composition bias toward gly residues; that stretch reads GESGGASGRLN.

This sequence belongs to the DNA gyrase inhibitor YacG family. As to quaternary structure, interacts with GyrB. Requires Zn(2+) as cofactor.

Functionally, inhibits all the catalytic activities of DNA gyrase by preventing its interaction with DNA. Acts by binding directly to the C-terminal domain of GyrB, which probably disrupts DNA binding by the gyrase. This Ralstonia nicotianae (strain ATCC BAA-1114 / GMI1000) (Ralstonia solanacearum) protein is DNA gyrase inhibitor YacG.